We begin with the raw amino-acid sequence, 277 residues long: Undecaprenyl-diphosphatase (277 aa).

A run of 6 helical transmembrane segments spans residues 88–108, 117–137, 157–179, 191–211, 227–247, and 255–275; these read MGWL…LFQD, MWIV…ADAV, FAQA…AGLL, SFLL…YKTV, LATV…LKFV, and FVWY…FNVI.

It belongs to the UppP family.

The protein localises to the cell membrane. It catalyses the reaction di-trans,octa-cis-undecaprenyl diphosphate + H2O = di-trans,octa-cis-undecaprenyl phosphate + phosphate + H(+). Catalyzes the dephosphorylation of undecaprenyl diphosphate (UPP). Confers resistance to bacitracin. The sequence is that of Undecaprenyl-diphosphatase from Paenarthrobacter aurescens (strain TC1).